The chain runs to 285 residues: MKLCGFDVGIDQPFFLIAGTCSIEGLQMSLDVAGLLKEACAGLGIPLIYKGSFDKANRSSGTTNRGLGLEAGLKILDEVRRQTGLPVLTDVHDESQVAEVASVVDVLQTPAFLCRQTDFIRAVAMSGKPVNIKKGQFLAPWDMKNVIDKARAAARDAGLSEDRFLACERGVSFGYNNLVADMTSLAEMRNTGAPVVFDVTHSVQKPGGLGGSSGGAREMVPVLARAGVAVGVAGLFMETHPDPAKAFSDGPNAVPLKHMKTLLEQLVALDRVVKTRPLLENDFSC.

This sequence belongs to the KdsA family.

Its subcellular location is the cytoplasm. The enzyme catalyses D-arabinose 5-phosphate + phosphoenolpyruvate + H2O = 3-deoxy-alpha-D-manno-2-octulosonate-8-phosphate + phosphate. Its pathway is carbohydrate biosynthesis; 3-deoxy-D-manno-octulosonate biosynthesis; 3-deoxy-D-manno-octulosonate from D-ribulose 5-phosphate: step 2/3. It functions in the pathway bacterial outer membrane biogenesis; lipopolysaccharide biosynthesis. The sequence is that of 2-dehydro-3-deoxyphosphooctonate aldolase from Leptothrix cholodnii (strain ATCC 51168 / LMG 8142 / SP-6) (Leptothrix discophora (strain SP-6)).